The chain runs to 481 residues: Sestrin-1 (481 aa).

The N-terminal domain; may mediate the alkylhydroperoxide reductase activity stretch occupies residues Phe63 to Gly244. Cys122 (cysteine sulfenic acid (-SOH) intermediate) is an active-site residue. Residues Lys295 to Arg316 form a disordered region. The C-terminal domain; mediates TORC1 regulation stretch occupies residues Pro310–Thr481. L-leucine contacts are provided by residues Thr375 to Thr378, Thr387, and Glu452.

Belongs to the sestrin family.

Its subcellular location is the nucleus. It is found in the cytoplasm. The catalysed reaction is a hydroperoxide + L-cysteinyl-[protein] = S-hydroxy-L-cysteinyl-[protein] + an alcohol. In terms of biological role, may function as an intracellular leucine sensor that negatively regulates the TORC1 signaling pathway through the GATOR complex. In absence of leucine, binds the GATOR subcomplex GATOR2 and prevents TORC1 signaling. Binding of leucine to SESN2 disrupts its interaction with GATOR2 thereby activating the TORC1 signaling pathway. This stress-inducible metabolic regulator may also play a role in protection against oxidative and genotoxic stresses. May prevent the accumulation of reactive oxygen species (ROS) through the alkylhydroperoxide reductase activity born by the N-terminal domain of the protein. This is Sestrin-1 from Xenopus laevis (African clawed frog).